A 192-amino-acid chain; its full sequence is Ion-translocating oxidoreductase complex subunit B (192 aa).

The hydrophobic stretch occupies residues Met1 to Ser26. Residues Glu32–Val91 form the 4Fe-4S domain. The [4Fe-4S] cluster site is built by Cys49, Cys52, Cys57, Cys74, Cys117, Cys120, Cys123, Cys127, Cys147, Cys150, Cys153, and Cys157. 4Fe-4S ferredoxin-type domains follow at residues Met108–Arg137 and Val138–Val167.

It belongs to the 4Fe4S bacterial-type ferredoxin family. RnfB subfamily. As to quaternary structure, the complex is composed of six subunits: RsxA, RsxB, RsxC, RsxD, RsxE and RsxG. Requires [4Fe-4S] cluster as cofactor.

The protein localises to the cell inner membrane. Its function is as follows. Part of a membrane-bound complex that couples electron transfer with translocation of ions across the membrane. Required to maintain the reduced state of SoxR. The polypeptide is Ion-translocating oxidoreductase complex subunit B (Shigella boydii serotype 4 (strain Sb227)).